The chain runs to 156 residues: Arginine repressor (156 aa).

The protein belongs to the ArgR family.

The protein localises to the cytoplasm. It participates in amino-acid biosynthesis; L-arginine biosynthesis [regulation]. Functionally, regulates arginine biosynthesis genes. This is Arginine repressor from Edwardsiella ictaluri (strain 93-146).